Here is a 1019-residue protein sequence, read N- to C-terminus: DNA topoisomerase 1 (1019 aa).

The segment at 1 to 160 is disordered; that stretch reads MNSIQVKNEP…KTMSITGSGE (160 aa). Residues 46-56 are compositionally biased toward basic and acidic residues; sequence KPLAKRPKVED. The segment covering 62 to 78 has biased composition (polar residues); the sequence is PLTSTVSSQNGVQKRSG. Composition is skewed to acidic residues over residues 83–93 and 107–136; these read DDNDDDSDSDS and SDDD…DDDD. Interaction with DNA regions lie at residues 379–380, 442–447, and 556–558; these read KY, RAGNEK, and SAK. Residues 386 to 860 form the Topo IB-type catalytic domain; that stretch reads TSNFKTNSDR…KKVKKEEEEN (475 aa). Residues 716–737 form a disordered region; sequence EQKGLTGDDGTPKKGKKAKNVE. The active-site O-(3'-phospho-DNA)-tyrosine intermediate is the tyrosine 822. Disordered stretches follow at residues 843–890 and 940–1019; these read GQGK…TGDS and MRKL…AAVV. A compositionally biased stretch (basic and acidic residues) spans 854-863; it reads KKEEEENDIK. Positions 864 to 879 are enriched in basic residues; the sequence is PKKKDAKGAASKKRAA. Composition is skewed to basic and acidic residues over residues 940 to 950 and 980 to 996; these read MRKLDSAERKG and TSAD…VDKT. Residues 997-1012 show a composition bias toward acidic residues; that stretch reads EESDDDLSSDSSDDED.

Belongs to the type IB topoisomerase family. As to quaternary structure, monomer.

The enzyme catalyses ATP-independent breakage of single-stranded DNA, followed by passage and rejoining.. Its function is as follows. Releases the supercoiling and torsional tension of DNA introduced during the DNA replication and transcription by transiently cleaving and rejoining one strand of the DNA duplex. Introduces a single-strand break via transesterification at a target site in duplex DNA. The scissile phosphodiester is attacked by the catalytic tyrosine of the enzyme, resulting in the formation of a DNA-(3'-phosphotyrosyl)-enzyme intermediate and the expulsion of a 5'-OH DNA strand. The free DNA strand then rotates around the intact phosphodiester bond on the opposing strand, thus removing DNA supercoils. Finally, in the religation step, the DNA 5'-OH attacks the covalent intermediate to expel the active-site tyrosine and restore the DNA phosphodiester backbone. The chain is DNA topoisomerase 1 (TOP1) from Mycosarcoma maydis (Corn smut fungus).